The primary structure comprises 437 residues: MPIIRKVLARQILDSRGNPTVEVDVYTENSFGRAAVPSGASTGIHEAVELRDGDAGIYLGKGVLKAVDNVNTVINDALKGMLVTEQEEIDEALLALDGTPNKSKLGANALLGVSLACAKAGAEYTGLPLFRYIGGTMANTLPVPMMNVLNGGAHADNTVDFQEFMIMPIGFSSYSDALRCGAEIFHALKSLLKSKGLSTAVGDEGGFAPNLRSNEEAIELVIEAIGKAGYKAGSPTDKGGLGEAQVMIALDPASSEFYDSAKKRYVFKKSSKQELTSLEMAEYWEKWASDYPIISIEDGMAEDDWEGWKILTDKIGSRVQLVGDDLFVTNSKRLAEGIERRVGNSILIKVNQIGTLTETLQAIDLAKRNGYTAVISHRSGETEDSTIAQIAVATNAGQIKTGSMSRSDRMAKYNELLRIEEELCGQAKYPGASAFRV.

Q162 serves as a coordination point for (2R)-2-phosphoglycerate. E204 (proton donor) is an active-site residue. Positions 251, 297, and 324 each coordinate Mg(2+). (2R)-2-phosphoglycerate contacts are provided by K349, R378, S379, and K400. The active-site Proton acceptor is K349.

It belongs to the enolase family. Mg(2+) serves as cofactor.

It localises to the cytoplasm. Its subcellular location is the secreted. The protein localises to the cell surface. It carries out the reaction (2R)-2-phosphoglycerate = phosphoenolpyruvate + H2O. The protein operates within carbohydrate degradation; glycolysis; pyruvate from D-glyceraldehyde 3-phosphate: step 4/5. In terms of biological role, catalyzes the reversible conversion of 2-phosphoglycerate (2-PG) into phosphoenolpyruvate (PEP). It is essential for the degradation of carbohydrates via glycolysis. The protein is Enolase of Chlorobium limicola (strain DSM 245 / NBRC 103803 / 6330).